The sequence spans 86 residues: Sec-independent protein translocase protein TatA (86 aa).

Residues 1–21 traverse the membrane as a helical segment; that stretch reads MGGISIWQLLIIAVIVVLLFG. The segment at 42-86 is disordered; sequence AIGDDNQPQQAQKTSSDADFETKNITEKQSVAQSETSESKNKEQV. Composition is skewed to polar residues over residues 47–58 and 68–77; these read NQPQQAQKTSSD and EKQSVAQSET.

Belongs to the TatA/E family. As to quaternary structure, the Tat system comprises two distinct complexes: a TatABC complex, containing multiple copies of TatA, TatB and TatC subunits, and a separate TatA complex, containing only TatA subunits. Substrates initially bind to the TatABC complex, which probably triggers association of the separate TatA complex to form the active translocon.

Its subcellular location is the cell inner membrane. Its function is as follows. Part of the twin-arginine translocation (Tat) system that transports large folded proteins containing a characteristic twin-arginine motif in their signal peptide across membranes. TatA could form the protein-conducting channel of the Tat system. In Photorhabdus laumondii subsp. laumondii (strain DSM 15139 / CIP 105565 / TT01) (Photorhabdus luminescens subsp. laumondii), this protein is Sec-independent protein translocase protein TatA.